We begin with the raw amino-acid sequence, 135 residues long: Small ribosomal subunit protein uS8 (135 aa).

Belongs to the universal ribosomal protein uS8 family. As to quaternary structure, part of the 30S ribosomal subunit. Contacts proteins S5 and S12.

Its function is as follows. One of the primary rRNA binding proteins, it binds directly to 16S rRNA central domain where it helps coordinate assembly of the platform of the 30S subunit. This chain is Small ribosomal subunit protein uS8, found in Salinispora arenicola (strain CNS-205).